The chain runs to 359 residues: MKAYLVLATGETFAGEIANAKEDVYGEVVFFTGMTGYQEVLSDPSFKGQLVVFTYPLIGNYGINASDFESKEPQAAGLIVSEQSEEGHHYEATQSLQQFCDQHQLPLLTGIDTRAVVKRIREQGDMPAVITTDLSRVSFEEWVPLSERALVDEVSTKKVETFEGNGPHIVLIDYGFKQSILNSLLKRDCQVTIVPYDVSFEVVQELNPDGLLFSNGPGDPKQIEDRLPTIYRLASTYPSLGICLGHQLLALAFGADTEKLRFGHRGANQPVINLKSNRVYMTSQNHSYVVKEDSLQRTDWDATFKNINDGSIEGLTHKYLPIQTVQFHPEAHPGPSDSDEIFHSFIDDVAAKGREKTYA.

Residues 1-168 (MKAYLVLATG…VETFEGNGPH (168 aa)) are CPSase. The L-glutamine site is built by Ser45, Gly216, and Gly218. The Glutamine amidotransferase type-1 domain maps to 168–355 (HIVLIDYGFK…IDDVAAKGRE (188 aa)). The active-site Nucleophile is Cys243. Residues Leu244, Gln247, Asn285, and Tyr288 each contribute to the L-glutamine site. Catalysis depends on residues His328 and Glu330.

This sequence belongs to the CarA family. Composed of two chains; the small (or glutamine) chain promotes the hydrolysis of glutamine to ammonia, which is used by the large (or ammonia) chain to synthesize carbamoyl phosphate. Tetramer of heterodimers (alpha,beta)4.

It carries out the reaction hydrogencarbonate + L-glutamine + 2 ATP + H2O = carbamoyl phosphate + L-glutamate + 2 ADP + phosphate + 2 H(+). It catalyses the reaction L-glutamine + H2O = L-glutamate + NH4(+). It functions in the pathway amino-acid biosynthesis; L-arginine biosynthesis; carbamoyl phosphate from bicarbonate: step 1/1. In terms of biological role, small subunit of the glutamine-dependent carbamoyl phosphate synthetase (CPSase). CPSase catalyzes the formation of carbamoyl phosphate from the ammonia moiety of glutamine, carbonate, and phosphate donated by ATP, constituting the first step of the biosynthetic pathway leading to arginine and/or urea. The small subunit (glutamine amidotransferase) binds and cleaves glutamine to supply the large subunit with the substrate ammonia. This chain is Carbamoyl phosphate synthase arginine-specific small chain, found in Halalkalibacterium halodurans (strain ATCC BAA-125 / DSM 18197 / FERM 7344 / JCM 9153 / C-125) (Bacillus halodurans).